The following is a 204-amino-acid chain: Inactive ribonuclease-like protein 9 (204 aa).

Positions 1–26 (MMRTLITTHPLLLLLLLQQLLQPVQF) are cleaved as a signal peptide. Cystine bridges form between Cys-97–Cys-152, Cys-115–Cys-167, and Cys-122–Cys-129. N-linked (GlcNAc...) asparagine glycosylation is found at Asn-130 and Asn-142.

It belongs to the pancreatic ribonuclease family.

Its subcellular location is the secreted. In terms of biological role, does not exhibit any ribonuclease activity. The chain is Inactive ribonuclease-like protein 9 (RNASE9) from Macaca mulatta (Rhesus macaque).